Reading from the N-terminus, the 424-residue chain is Histidine--tRNA ligase (424 aa).

This sequence belongs to the class-II aminoacyl-tRNA synthetase family. Homodimer.

It is found in the cytoplasm. The enzyme catalyses tRNA(His) + L-histidine + ATP = L-histidyl-tRNA(His) + AMP + diphosphate + H(+). This is Histidine--tRNA ligase from Shewanella sediminis (strain HAW-EB3).